We begin with the raw amino-acid sequence, 181 residues long: MLASVALAALAGVGTPHATADDASPLVPLVDAAAQRLQTADPVAASKFRSGGAIDDPDREQQVIAAVTGDATRHNIDPGYVHDVFRNQIDATSSVEHTRFAQWKLDPAAAPSSAPDLSESRQKIDTLNRTMVDEIARQWPVLHSPVCRPDLDRALDAVATARGFDPVYRHALEYATHSYCR.

Positions 1-20 (MLASVALAALAGVGTPHATA) are cleaved as a signal peptide. Positions 21–100 (DDASPLVPLV…ATSSVEHTRF (80 aa)) constitute a Chorismate mutase domain. Substrate-binding positions include arginine 36, lysine 47, aspartate 56, 59-63 (REQQV), 92-96 (TSSVE), and arginine 121. Cysteines 147 and 180 form a disulfide.

In terms of assembly, homodimer.

The protein localises to the secreted. It catalyses the reaction chorismate = prephenate. The protein operates within metabolic intermediate biosynthesis; prephenate biosynthesis; prephenate from chorismate: step 1/1. Functionally, catalyzes the Claisen rearrangement of chorismate to prephenate. May play some role in the pathogenicity. This is Secreted chorismate mutase from Mycolicibacterium smegmatis (strain ATCC 700084 / mc(2)155) (Mycobacterium smegmatis).